The sequence spans 728 residues: Tripartite terminase subunit 1 (728 aa).

The C3H1-type zinc-finger motif lies at cysteine 186–histidine 214. The interval alanine 239–aspartate 278 is disordered. Basic and acidic residues predominate over residues glycine 247–glutamate 257. Positions aspartate 258 to proline 269 are enriched in acidic residues. Tyrosine 653–serine 660 contributes to the ATP binding site.

Belongs to the herpesviridae TRM1 protein family. In terms of assembly, associates with TRM2 and TRM3 to form the tripartite terminase complex. Interacts with portal protein.

The protein resides in the host nucleus. Functionally, component of the molecular motor that translocates viral genomic DNA in empty capsid during DNA packaging. Forms a tripartite terminase complex together with TRM2 and TRM3 in the host cytoplasm. Once the complex reaches the host nucleus, it interacts with the capsid portal vertex. This portal forms a ring in which genomic DNA is translocated into the capsid. TRM1 carries an endonuclease activity that plays an important role for the cleavage of concatemeric viral DNA into unit length genomes. The chain is Tripartite terminase subunit 1 from Equine herpesvirus 2 (strain 86/87) (EHV-2).